A 196-amino-acid polypeptide reads, in one-letter code: Holliday junction branch migration complex subunit RuvA (196 aa).

Residues 1-63 (MLDFIKGEIV…EETHQLFGFI (63 aa)) form a domain I region. The domain II stretch occupies residues 64–142 (DKKERQLFTH…PDNIPSSDTI (79 aa)). The flexible linker stretch occupies residues 143 to 146 (ITNI). A domain III region spans residues 146–196 (ISSNITKEAITALITLGFSQSASQKVVNKIVSNNSSSTTIEQIIKKALKLL).

The protein belongs to the RuvA family. Homotetramer. Forms an RuvA(8)-RuvB(12)-Holliday junction (HJ) complex. HJ DNA is sandwiched between 2 RuvA tetramers; dsDNA enters through RuvA and exits via RuvB. An RuvB hexamer assembles on each DNA strand where it exits the tetramer. Each RuvB hexamer is contacted by two RuvA subunits (via domain III) on 2 adjacent RuvB subunits; this complex drives branch migration. In the full resolvosome a probable DNA-RuvA(4)-RuvB(12)-RuvC(2) complex forms which resolves the HJ.

The protein resides in the cytoplasm. Functionally, the RuvA-RuvB-RuvC complex processes Holliday junction (HJ) DNA during genetic recombination and DNA repair, while the RuvA-RuvB complex plays an important role in the rescue of blocked DNA replication forks via replication fork reversal (RFR). RuvA specifically binds to HJ cruciform DNA, conferring on it an open structure. The RuvB hexamer acts as an ATP-dependent pump, pulling dsDNA into and through the RuvAB complex. HJ branch migration allows RuvC to scan DNA until it finds its consensus sequence, where it cleaves and resolves the cruciform DNA. This chain is Holliday junction branch migration complex subunit RuvA, found in Azobacteroides pseudotrichonymphae genomovar. CFP2.